The following is a 263-amino-acid chain: MINVEYKHTQVAAKKKLGQNFLTDRNITRKTVLLSGAKPDDQVVEIGPGFGALTRELVEECHNLTVIEKDPTLATFIRNEYPQIKVIEGDVLTINFSAMAQAGKPLQILGNIPYSITSPILFHLLEHRRAFRSATLMMQHEVALRLAAKPATKEYGILAVQMQAFCKVEYLFKVSRKVFKPQPKVESAVIKLTPHATDPALDADGFRRFVRIAFHQRRKTLLNNLKESYNLELVDSNKLQLRAEALSIEELLELFSLIKTKSE.

Residues Asn20, Leu22, Gly47, Glu68, Asp90, and Asn111 each contribute to the S-adenosyl-L-methionine site.

This sequence belongs to the class I-like SAM-binding methyltransferase superfamily. rRNA adenine N(6)-methyltransferase family. RsmA subfamily.

Its subcellular location is the cytoplasm. It carries out the reaction adenosine(1518)/adenosine(1519) in 16S rRNA + 4 S-adenosyl-L-methionine = N(6)-dimethyladenosine(1518)/N(6)-dimethyladenosine(1519) in 16S rRNA + 4 S-adenosyl-L-homocysteine + 4 H(+). Its function is as follows. Specifically dimethylates two adjacent adenosines (A1518 and A1519) in the loop of a conserved hairpin near the 3'-end of 16S rRNA in the 30S particle. May play a critical role in biogenesis of 30S subunits. The polypeptide is Ribosomal RNA small subunit methyltransferase A (Chlorobium chlorochromatii (strain CaD3)).